Consider the following 580-residue polypeptide: MAVRQALGRGLQLGRALLLRFAPKPGPLFGWGKPGPAAAWGRGERPGQVVSPGAQPRPVGLPLPDRYRFFRQSVAGLAARIQRQFMVRARGGAGPCGRAVFLAFGLGLGLIEEKQAEGRRAASACQEIQAIFTQKTKRVSDPLDTRCWQGFRLEDYLIGQAIGKGCNAAVYEATMPTLPQHLEKAKHLGLIGKGPDVVLKGADGEQAPGTPTFPFAIKMMWNISAGSSSEAILSKMSQELVPASRVALAGEYGAVTYRRSRDGPKQLAPHPNIIRVFRAFTSSVPLLPGALADYPDMLPPHYYPEGLGHGRTLFLVMKNYPCTLRQYLEEQTPSSRLATMMTLQLLEGVDHLVQQGIAHRDLKSDNILVEWDSDGCPWLVISDFGCCLADQHVGLRLPFNSSSVERGGNGSLMAPEVSTAHSGPSAVIDYSKADTWAVGAIAYEIFGLANPFYGQGSAHLESRSYQEAQLPEMPESVPPEARRLVRSLLQREASKRPSARLAANVLHLSLWGEHLLALKNLKLDKMIAWLLQQSAATLLADRLREKSCVETKLQMLFLANLECEALCQAALLLSSWRAAP.

The N-terminal 77 residues, 1–77 (MAVRQALGRG…RFFRQSVAGL (77 aa)), are a transit peptide targeting the mitochondrion. Over 78-93 (AARIQRQFMVRARGGA) the chain is Mitochondrial intermembrane. The helical transmembrane segment at 94-110 (GPCGRAVFLAFGLGLGL) threads the bilayer. A required for outer membrane localization region spans residues 111-117 (IEEKQAE). Over 111-580 (IEEKQAEGRR…LLLSSWRAAP (470 aa)) the chain is Cytoplasmic. One can recognise a Protein kinase domain in the interval 156–510 (YLIGQAIGKG…LAANVLHLSL (355 aa)). ATP-binding positions include 162–170 (IGKGCNAAV) and K186. S227 bears the Phosphoserine; by autocatalysis mark. D361 serves as the catalytic Proton acceptor. Phosphoserine; by autocatalysis is present on S401.

This sequence belongs to the protein kinase superfamily. Ser/Thr protein kinase family. As to quaternary structure, upon mitochondrial depolarization, it forms a supercomplex with TOM and TIM23 complexes. PINK1-TOM-TIM23 supercomplex formation requires PINK1 interaction with TOMM20 and TOMM70 and is critical for PINK1 stabilization at the outer mitochondrial membrane, kinase activation and downstream mitophagy. Upon mitochondrial depolarization, interacts with TIMM23; the interaction is required for PINK1 accumulation at the outer mitochondrial membrane, kinase activation by autophosphorylation and PRKN recruitement to mitochondria. Interacts with PRKN. Interacts with FBXO7. Forms a complex with PRKN and PARK7. Interacts with NENF. Mg(2+) is required as a cofactor. Post-translationally, proteolytically cleaved. In healthy cells, the precursor is continuously imported into the inner mitochondrial membrane (IMM), where it is proteolytically cleaved by mitochondrial-processing peptidase (MPP) and then undergoes further proteolytic cleavage by PARL or AFG3L2 to give rise to the 52 kDa short form. The 52 kDa short form is then released into the cytosol where it rapidly undergoes proteasome-dependent degradation. In unhealthy cells, when cellular stress conditions lead to the loss of mitochondrial membrane potential, mitochondrial import is impaired leading to the precursor accumulating on the outer mitochondrial membrane (OMM). If accumulation at the OMM fails and it is imported into the depolarized mitochondria, it undergoes cleavage by the IMM protease OMA1, promoting its subsequent degradation by the proteasome. In terms of processing, autophosphorylated. Loss of mitochondrial membrane potential results in the precursor accumulating on the outer mitochondrial membrane (OMM) where it is activated by autophosphorylation. Autophosphorylation at Ser-227 and Ser-401 is essential for selective recruitment of PRKN to depolarized mitochondria, via PINK1-dependent phosphorylation of ubiquitin and PRKN. In terms of tissue distribution, high levels expressed in testis, lower levels in brain, heart, lung, liver and kidney.

Its subcellular location is the mitochondrion outer membrane. The protein localises to the mitochondrion inner membrane. The protein resides in the cytoplasm. It is found in the cytosol. The catalysed reaction is L-seryl-[protein] + ATP = O-phospho-L-seryl-[protein] + ADP + H(+). It catalyses the reaction L-threonyl-[protein] + ATP = O-phospho-L-threonyl-[protein] + ADP + H(+). Functionally, serine/threonine-protein kinase which acts as a sensor of mitochondrial damage and protects against mitochondrial dysfunction during cellular stress. It phosphorylates mitochondrial proteins to coordinate mitochondrial quality control mechanisms that remove and replace dysfunctional mitochondrial components. Depending on the severity of mitochondrial damage, activity ranges from preventing apoptosis and stimulating mitochondrial biogenesis to eliminating severely damaged mitochondria via PINK1-PRKN-dependent mitophagy. When cellular stress results in irreversible mitochondrial damage, PINK1 accumulates at the outer mitochondrial membrane (OMM) where it phosphorylates pre-existing polyubiquitin chains at 'Ser-65', recruits PRKN from the cytosol to the OMM and activates PRKN by phosphorylation at 'Ser-65'. Activated PRKN then ubiquinates VDAC1 and other OMM proteins to initiate mitophagy. The PINK1-PRKN pathway also promotes fission of damaged mitochondria by phosphorylating and thus promoting the PRKN-dependent degradation of mitochondrial proteins involved in fission such as MFN2. This prevents the refusion of unhealthy mitochondria with the mitochondrial network or initiates mitochondrial fragmentation facilitating their later engulfment by autophagosomes. Also promotes mitochondrial fission independently of PRKN and ATG7-mediated mitophagy, via the phosphorylation and activation of DNM1L. Regulates motility of damaged mitochondria by promoting the ubiquitination and subsequent degradation of MIRO1 and MIRO2; in motor neurons, this likely inhibits mitochondrial intracellular anterograde transport along the axons which probably increases the chance of the mitochondria undergoing mitophagy in the soma. Required for ubiquinone reduction by mitochondrial complex I by mediating phosphorylation of complex I subunit NDUFA10. Phosphorylates LETM1, positively regulating its mitochondrial calcium transport activity. This is Serine/threonine-protein kinase PINK1, mitochondrial (Pink1) from Mus musculus (Mouse).